Consider the following 352-residue polypeptide: Histidinol-phosphate aminotransferase (352 aa).

The residue at position 221 (K221) is an N6-(pyridoxal phosphate)lysine.

This sequence belongs to the class-II pyridoxal-phosphate-dependent aminotransferase family. Histidinol-phosphate aminotransferase subfamily. As to quaternary structure, homodimer. Pyridoxal 5'-phosphate is required as a cofactor.

The catalysed reaction is L-histidinol phosphate + 2-oxoglutarate = 3-(imidazol-4-yl)-2-oxopropyl phosphate + L-glutamate. Its pathway is amino-acid biosynthesis; L-histidine biosynthesis; L-histidine from 5-phospho-alpha-D-ribose 1-diphosphate: step 7/9. This chain is Histidinol-phosphate aminotransferase, found in Staphylococcus aureus (strain bovine RF122 / ET3-1).